Consider the following 484-residue polypeptide: Suppressor of fused homolog (484 aa).

A disordered region spans residues 1-24 (MAELRPSGAPGPTAPPAPGPTAPP). Residues 12 to 23 (PTAPPAPGPTAP) show a composition bias toward pro residues. Residue lysine 257 forms a Glycyl lysine isopeptide (Lys-Gly) (interchain with G-Cter in ubiquitin) linkage. The disordered stretch occupies residues 279 to 360 (SRPPEDDEDS…SSTAIIPHEL (82 aa)). At serine 301 the chain carries Phosphoserine. Lysine 303 bears the N6-acetyllysine mark. Lysine 321 participates in a covalent cross-link: Glycyl lysine isopeptide (Lys-Gly) (interchain with G-Cter in SUMO2). Residues 336–347 (AHDRAPSRKDSL) are compositionally biased toward basic and acidic residues. Phosphoserine is present on residues serine 342, serine 346, and serine 352. Threonine 353 is modified (phosphothreonine). At serine 481 the chain carries Phosphoserine.

The protein belongs to the SUFU family. May form homodimers. Part of a DNA-bound corepressor complex containing SAP18, GLI1 and SIN3. Part of a complex containing CTNNB1. Binds BTRC, GLI2, GLI3, SAP18 and STK36. Binds both free and DNA-bound GLI1. Interacts with KIF7. Interacts with GLI3FL and this interaction regulates the formation of either repressor or activator forms of GLI3. Its association with GLI3FL is regulated by Hh signaling and dissociation of the SUFU-GLI3 interaction requires the presence of the ciliary motor KIF3A. Interacts with ULK3; inactivating the protein kinase activity of ULK3. Interacts with RAB23. Post-translationally, polyubiquitinated at Lys-257 by the SCF(FBXL17) complex, leading to its subsequent degradation and allowing the release of GLI1 for proper hedgehog/smoothened signal transduction. Ubiquitination is impaired by phosphorylation at Ser-342, Ser-346, Ser-352 and Thr-353. Phosphorylation at Ser-342, Ser-346, Ser-352 and Thr-353 prevents ubiquitination by the SCF(FBXL17) complex. As to expression, ubiquitous in adult tissues. Detected in osteoblasts of the perichondrium in the developing limb of 12-week old embryos. Isoform 1 is detected in fetal brain, lung, kidney and testis. Isoform 2 is detected in fetal testis, and at much lower levels in fetal brain, lung and kidney.

The protein resides in the cytoplasm. It is found in the nucleus. Negative regulator in the hedgehog/smoothened signaling pathway. Down-regulates GLI1-mediated transactivation of target genes. Down-regulates GLI2-mediated transactivation of target genes. Part of a corepressor complex that acts on DNA-bound GLI1. May also act by linking GLI1 to BTRC and thereby targeting GLI1 to degradation by the proteasome. Sequesters GLI1, GLI2 and GLI3 in the cytoplasm, this effect is overcome by binding of STK36 to both SUFU and a GLI protein. Negative regulator of beta-catenin signaling. Regulates the formation of either the repressor form (GLI3R) or the activator form (GLI3A) of the full-length form of GLI3 (GLI3FL). GLI3FL is complexed with SUFU in the cytoplasm and is maintained in a neutral state. Without the Hh signal, the SUFU-GLI3 complex is recruited to cilia, leading to the efficient processing of GLI3FL into GLI3R. When Hh signaling is initiated, SUFU dissociates from GLI3FL and the latter translocates to the nucleus, where it is phosphorylated, destabilized, and converted to a transcriptional activator (GLI3A). Required for normal embryonic development. Required for the proper formation of hair follicles and the control of epidermal differentiation. This Homo sapiens (Human) protein is Suppressor of fused homolog.